The following is a 221-amino-acid chain: Growth hormone-releasing peptides (221 aa).

Residues 1-25 (MHLKIGTLTIRTIMLFTLCTFLTLF) form the signal peptide. A propeptide spanning residues 26–95 (AFSTCFDETK…QPENEFLQER (70 aa)) is cleaved from the precursor. A Phenylalanine amide modification is found at F107. The propeptide occupies 110–127 (TSDDKIAKSIPSFDKIAK). Phenylalanine amide is present on residues F136, F156, and F176. The propeptide occupies 179 to 221 (TPHSDRLQYEMNSHPLELKNPEEDSDRKKRQAMTFRIRTDLQM).

It belongs to the FARP (FMRFamide related peptide) family. As to expression, observed in the suprachiasmatic nucleus and in several telencephalic and diencephalic regions.

The protein localises to the secreted. Primary role is to release GH from the pituitary. May act as an endogenous ligand in the bullfrog hypothalamo-hypophysial system. The chain is Growth hormone-releasing peptides from Aquarana catesbeiana (American bullfrog).